Reading from the N-terminus, the 449-residue chain is Pectate lyase L (449 aa).

The signal sequence occupies residues 1 to 26; it reads MFKRNDRSKNGFNALRLGVSFVLASS. Cys27 is lipidated: N-palmitoyl cysteine. The S-diacylglycerol cysteine moiety is linked to residue Cys27. PbH1 repeat units follow at residues 158 to 179, 180 to 202, 213 to 242, 245 to 267, 274 to 308, 336 to 358, and 359 to 391; these read GDFWLVKGLEVKGAGDNGIYIG, GSNNRIENVETHHNRDTGLQLGR, PANNLILNSYSHDNADPDNGEDADGFAAKL, GSGNVFDNCLAAYNVDDGWDLYS, IGAVTILNSVAHHNGQTSDGTSTANSDGNGFKLGG, PGTITLTNNTSWDNGQSNFAFDK, and GEHVFINNLSFEGTASDKTSGTDQDNSNVWWKN. Asp236, Asp260, Asp261, and Asp264 together coordinate Ca(2+). The Proton acceptor role is filled by Lys305.

The protein belongs to the polysaccharide lyase 9 family. The cofactor is Ca(2+).

The protein localises to the secreted. It carries out the reaction Eliminative cleavage of (1-&gt;4)-alpha-D-galacturonan to give oligosaccharides with 4-deoxy-alpha-D-galact-4-enuronosyl groups at their non-reducing ends.. With respect to regulation, activated in presence of the surfactant polysorbate 20, while inhibited in the presence of polysorbate 40, polysorbate 60, polysorbate 80, Triton X-100 and sodium dodecyl sulfate. Inhibited by the metal chelator ethylenediaminetetraacetic acid (EDTA). Inhibited by iron and cobalt ions. Functionally, presents an endo-cleaving activity on the homogalacturonan (HG) region in pectin with a preference for low- or unmethylated pectin. In Paenibacillus polymyxa (strain SC2) (Bacillus polymyxa), this protein is Pectate lyase L.